The chain runs to 859 residues: Auxin response factor 2 (859 aa).

The interval M1 to A48 is disordered. Over residues G14–S23 the composition is skewed to low complexity. The segment at residues F164 to M266 is a DNA-binding region (TF-B3). Pro residues predominate over residues L396–P407. Disordered regions lie at residues L396–S442, I687–T736, and R829–S859. Polar residues-rich tracts occupy residues I416 to L426 and L695 to S704. The 85-residue stretch at R733–E817 folds into the PB1 domain. The span at S847–S859 shows a compositional bias: polar residues.

The protein belongs to the ARF family. In terms of assembly, homodimers and heterodimers. Interacts with ARF1. As to expression, expressed in the whole plant.

It localises to the nucleus. Its function is as follows. Auxin response factors (ARFs) are transcriptional factors that bind specifically to the DNA sequence 5'-TGTCTC-3' found in the auxin-responsive promoter elements (AuxREs). Could act as transcriptional activator or repressor. Formation of heterodimers with Aux/IAA proteins may alter their ability to modulate early auxin response genes expression. Promotes flowering, stamen development, floral organ abscission and fruit dehiscence. Functions independently of ethylene and cytokinin response pathways. May act as a repressor of cell division and organ growth. The chain is Auxin response factor 2 (ARF2) from Arabidopsis thaliana (Mouse-ear cress).